The sequence spans 93 residues: Small ribosomal subunit protein uS19 (93 aa).

This sequence belongs to the universal ribosomal protein uS19 family.

In terms of biological role, protein S19 forms a complex with S13 that binds strongly to the 16S ribosomal RNA. The protein is Small ribosomal subunit protein uS19 of Leuconostoc citreum (strain KM20).